The primary structure comprises 1309 residues: Mediator of RNA polymerase II transcription subunit 33A (1309 aa).

The disordered stretch occupies residues 809 to 829; it reads QTLNPVNSGTSSSSGAASEDS. A compositionally biased stretch (low complexity) spans 816–826; that stretch reads SGTSSSSGAAS.

Belongs to the Mediator complex subunit 33 family. In terms of assembly, component of the Mediator complex.

It localises to the nucleus. In terms of biological role, component of the Mediator complex, a coactivator involved in the regulated transcription of nearly all RNA polymerase II-dependent genes. Mediator functions as a bridge to convey information from gene-specific regulatory proteins to the basal RNA polymerase II transcription machinery. The Mediator complex, having a compact conformation in its free form, is recruited to promoters by direct interactions with regulatory proteins and serves for the assembly of a functional preinitiation complex with RNA polymerase II and the general transcription factors. Involved in the repression of phenylpropanoid biosynthesis. May compete with MED33B for common binding partners or for occupancy in Mediator. The sequence is that of Mediator of RNA polymerase II transcription subunit 33A (MED33A) from Arabidopsis thaliana (Mouse-ear cress).